The chain runs to 293 residues: uncharacterized protein (293 aa).

In terms of domain architecture, HTH lysR-type spans Met-1–Thr-58. Positions Phe-18 to Lys-37 form a DNA-binding region, H-T-H motif.

The protein belongs to the LysR transcriptional regulatory family.

It localises to the cytoplasm. This is an uncharacterized protein from Bacillus subtilis (strain 168).